We begin with the raw amino-acid sequence, 603 residues long: Nuclear receptor subfamily 2 group C member 1 (603 aa).

Residues 1–178 (MATIEEIAHQ…RLQRCIAFGM (178 aa)) form a required for interaction with KAT2B region. Positions 110–185 (FDLCVVCGDK…FGMKQDSVQC (76 aa)) form a DNA-binding region, nuclear receptor. 2 NR C4-type zinc fingers span residues 113 to 133 (CVVC…CEGC) and 149 to 173 (CRGS…LQRC). A phosphoserine mark is found at Ser197 and Ser215. Phosphothreonine is present on Thr220. Thr222 bears the Phosphothreonine; by MAPK1 mark. Lys250 is covalently cross-linked (Glycyl lysine isopeptide (Lys-Gly) (interchain with G-Cter in SUMO2)). The NR LBD domain occupies 348–590 (GSVHLITGDS…SVIPHILKME (243 aa)). Phosphoserine; by PKC is present on Ser581. The required for interaction with NRIP1 stretch occupies residues 584 to 603 (PHILKMEPADYNSQIIGHSI). Residue Lys588 forms a Glycyl lysine isopeptide (Lys-Gly) (interchain with G-Cter in SUMO2) linkage.

It belongs to the nuclear hormone receptor family. NR2 subfamily. In terms of assembly, homodimer. Heterodimer; binds DNA as a heterodimer with NR2C2 required for chromatin remodeling and for binding to promoter regions such as globin DR1 repeats. Interacts with NRIP1 (via its LXXLL motifs); the interaction provides corepressor activity. Interacts with HDAC3 (via the DNA-binding domain). Interacts with HDAC4 (via the DNA-binding domain). Interacts with PIAS1; the interaction is required for sumoylation of NR2C1. Interacts with UBE2I; the interaction is required for sumoylation of NR2C1. Interacts with KAT2B; the interaction acts as a corepressor of gene expression. Interacts with ESR1; the interaction prevents homodimerization of ESR1 and suppresses its transcriptional activity and cell growth. Sumoylation requires both PIAS1 and UBE2I. Sumoylation appears to dissociate NR2C1 from the PML nuclear bodies. Enhances the interaction with NRIP1 but inhibits interaction with KAT2B. In proliferating cells, stimulation by all-trans retinoic acid, activation of MAPK1-mediated phosphorylation and recruitment to PML bodies with subsequent sumoylation, suppresses OCT4 expression. Post-translationally, phosphorylated on several serine and threonine residues. Phosphorylation on Thr-222, stimulated by all-trans retinoic acid (atRA) mediates PML location and sumoylation in proliferating cells which then modulates its association with effector molecules, KAT2B and NRIP1. Phosphorylation on Ser-581 by PKC is important for protein stability and function as activator of RARB.

The protein localises to the nucleus. It is found in the PML body. Orphan nuclear receptor. Binds the IR7 element in the promoter of its own gene in an autoregulatory negative feedback mechanism. Primarily repressor of a broad range of genes. Binds to hormone response elements (HREs) consisting of two 5'-AGGTCA-3' half site direct repeat consensus sequences. Together with NR2C2, forms the core of the DRED (direct repeat erythroid-definitive) complex that represses embryonic and fetal globin transcription. Also activator of OCT4 gene expression. May be involved in stem cell proliferation and differentiation. Mediator of retinoic acid-regulated preadipocyte proliferation. This chain is Nuclear receptor subfamily 2 group C member 1 (NR2C1), found in Homo sapiens (Human).